Reading from the N-terminus, the 629-residue chain is tRNA uridine 5-carboxymethylaminomethyl modification enzyme MnmG (629 aa).

FAD is bound by residues 13 to 18 (GGGHAG), Val-125, and Ser-180. Residue 273–287 (GPRYCPSIEDKVMRF) participates in NAD(+) binding. Gln-370 contacts FAD.

It belongs to the MnmG family. Homodimer. Heterotetramer of two MnmE and two MnmG subunits. The cofactor is FAD.

The protein localises to the cytoplasm. Its function is as follows. NAD-binding protein involved in the addition of a carboxymethylaminomethyl (cmnm) group at the wobble position (U34) of certain tRNAs, forming tRNA-cmnm(5)s(2)U34. The chain is tRNA uridine 5-carboxymethylaminomethyl modification enzyme MnmG from Shigella dysenteriae serotype 1 (strain Sd197).